The following is a 768-amino-acid chain: Transferrin receptor protein 1 (768 aa).

Topologically, residues 1–68 are cytoplasmic; it reads MMDQARSAFS…VAKPKRLNGY (68 aa). Residues 1–70 are mediates interaction with SH3BP4; the sequence is MMDQARSAFS…KPKRLNGYVC (70 aa). Phosphoserine is present on residues S10 and S19. Y20 carries the phosphotyrosine modification. The Endocytosis signal signature appears at 20–23; the sequence is YTRF. T21 is subject to Phosphothreonine. Residue S24 is modified to Phosphoserine. Residues 61 to 64 carry the Stop-transfer sequence motif; the sequence is KPKR. Residues 69 to 89 traverse the membrane as a helical segment; the sequence is VCYGIIAVITFFLIGFMIGYL. Residue C70 is the site of S-palmitoyl cysteine attachment. The Extracellular segment spans residues 90–768; sequence AYCKRVESKT…GDIWDIDNEF (679 aa). Residues 231–321 enclose the PA domain; it reads SKATTVTGKL…GTGDPYTPGF (91 aa). N259 and N325 each carry an N-linked (GlcNAc...) asparagine glycan. The interval 577–768 is ligand-binding; it reads TMDTYDVLSK…GDIWDIDNEF (192 aa). A Cell attachment site motif is present at residues 654-656; sequence RGD. Residues N730 and N735 are each glycosylated (N-linked (GlcNAc...) asparagine).

Belongs to the peptidase M28 family. M28B subfamily. As to quaternary structure, homodimer; disulfide-linked. Binds one transferrin or HFE molecule per subunit. Interacts with SH3BP4. Interacts with SH3BP3. Interacts with STEAP3; facilitates TFRC endocytosis in erythroid precursor cells. Stearoylated by ZDHHC6 which inhibits TFRC-mediated activation of the JNK pathway and promotes mitochondrial fragmentation. Stearoylation does not affect iron uptake.

It is found in the cell membrane. It localises to the melanosome. Functionally, cellular uptake of iron occurs via receptor-mediated endocytosis of ligand-occupied transferrin receptor into specialized endosomes. Endosomal acidification leads to iron release. The apotransferrin-receptor complex is then recycled to the cell surface with a return to neutral pH and the concomitant loss of affinity of apotransferrin for its receptor. Transferrin receptor is necessary for development of erythrocytes and the nervous system. Positively regulates T and B cell proliferation through iron uptake. Acts as a lipid sensor that regulates mitochondrial fusion by regulating activation of the JNK pathway. When dietary levels of stearate (C18:0) are low, promotes activation of the JNK pathway, resulting in HUWE1-mediated ubiquitination and subsequent degradation of the mitofusin MFN2 and inhibition of mitochondrial fusion. When dietary levels of stearate (C18:0) are high, TFRC stearoylation inhibits activation of the JNK pathway and thus degradation of the mitofusin MFN2. Mediates uptake of NICOL1 into fibroblasts where it may regulate extracellular matrix production. This chain is Transferrin receptor protein 1 (TFRC), found in Sus scrofa (Pig).